The following is a 630-amino-acid chain: Adenine DNA glycosylase (630 aa).

The segment covering 54–72 has biased composition (basic and acidic residues); it reads MRKCREKKEAEREAEREAE. The disordered stretch occupies residues 54 to 123; the sequence is MRKCREKKEA…ALGGDIEDLF (70 aa). The span at 73–123 shows a compositional bias: acidic residues; it reads REAEEEEKAEEAEAEADKEEAEEESEEEEEEEEEEAEAEEEALGGDIEDLF. Residue Glu168 is the Proton donor/acceptor of the active site. [4Fe-4S] cluster contacts are provided by Cys341, Cys348, Cys351, and Cys357. The Nudix hydrolase domain occupies 383 to 536; it reads PRHDFCCVCV…RKVPPFRLQH (154 aa). Positions 427–451 match the Nudix box motif; the sequence is VILNEEADSATRRNAINVYLKEAFR.

This sequence belongs to the Nth/MutY family. [4Fe-4S] cluster is required as a cofactor.

Its subcellular location is the nucleus. It catalyses the reaction Hydrolyzes free adenine bases from 7,8-dihydro-8-oxoguanine:adenine mismatched double-stranded DNA, leaving an apurinic site.. Functionally, involved in oxidative DNA damage repair. Initiates repair of A*oxoG to C*G by removing the inappropriately paired adenine base from the DNA backbone. Possesses both adenine and 2-OH-A DNA glycosylase activities. This is Adenine DNA glycosylase (MYH) from Arabidopsis thaliana (Mouse-ear cress).